Consider the following 148-residue polypeptide: D-aminoacyl-tRNA deacylase (148 aa).

Positions 137–138 (GP) match the Gly-cisPro motif, important for rejection of L-amino acids motif.

It belongs to the DTD family. Homodimer.

It localises to the cytoplasm. It catalyses the reaction glycyl-tRNA(Ala) + H2O = tRNA(Ala) + glycine + H(+). The catalysed reaction is a D-aminoacyl-tRNA + H2O = a tRNA + a D-alpha-amino acid + H(+). In terms of biological role, an aminoacyl-tRNA editing enzyme that deacylates mischarged D-aminoacyl-tRNAs. Also deacylates mischarged glycyl-tRNA(Ala), protecting cells against glycine mischarging by AlaRS. Acts via tRNA-based rather than protein-based catalysis; rejects L-amino acids rather than detecting D-amino acids in the active site. By recycling D-aminoacyl-tRNA to D-amino acids and free tRNA molecules, this enzyme counteracts the toxicity associated with the formation of D-aminoacyl-tRNA entities in vivo and helps enforce protein L-homochirality. In Aquifex aeolicus (strain VF5), this protein is D-aminoacyl-tRNA deacylase.